Consider the following 157-residue polypeptide: MASGDIATVANAELDLPYGSALTSSGRISAVTEPGELSVHYPFPTMDLVVLDDALKYGSRAAKARFAVYIGPLGADTAATAREILANVPTPENAVLLAVSPDQRAIEVVYGADVKGRGIESAAPLGVSAAAASFKEGNLIDGLISAVRVMSAGVSPA.

An Isoglutamyl lysine isopeptide (Lys-Gln) (interchain with Q-Cter in protein Pup) cross-link involves residue lysine 115.

This is an uncharacterized protein from Mycolicibacterium smegmatis (strain ATCC 700084 / mc(2)155) (Mycobacterium smegmatis).